Here is a 162-residue protein sequence, read N- to C-terminus: Small ribosomal subunit protein bS16 (162 aa).

The segment at 113–162 (ADGGPTTEATKPKKKSPAKKAAKAAEPAPQPEQPDTPALGGEQAELTAES) is disordered. Positions 124–134 (PKKKSPAKKAA) are enriched in basic residues.

The protein belongs to the bacterial ribosomal protein bS16 family.

The sequence is that of Small ribosomal subunit protein bS16 from Mycobacterium tuberculosis (strain ATCC 25177 / H37Ra).